Here is a 300-residue protein sequence, read N- to C-terminus: Ribosomal protein L11 methyltransferase (300 aa).

S-adenosyl-L-methionine contacts are provided by T152, G173, D195, and N234.

This sequence belongs to the methyltransferase superfamily. PrmA family.

It localises to the cytoplasm. It carries out the reaction L-lysyl-[protein] + 3 S-adenosyl-L-methionine = N(6),N(6),N(6)-trimethyl-L-lysyl-[protein] + 3 S-adenosyl-L-homocysteine + 3 H(+). Its function is as follows. Methylates ribosomal protein L11. The protein is Ribosomal protein L11 methyltransferase of Burkholderia thailandensis (strain ATCC 700388 / DSM 13276 / CCUG 48851 / CIP 106301 / E264).